A 435-amino-acid chain; its full sequence is Origin recognition complex subunit 5 (435 aa).

An ATP-binding site is contributed by 37–44 (GHTASGKT).

This sequence belongs to the ORC5 family. Component of ORC, a complex composed of at least 6 subunits: ORC1, ORC2, ORC3, ORC4, ORC5 and ORC6. ORC is regulated in a cell-cycle dependent manner. It is sequentially assembled at the exit from anaphase of mitosis and disassembled as cells enter S phase. In terms of processing, multi-mono-ubiquitinated by OBI1; ubiquitination is important for efficient DNA replication origin site activation. Ubiquitination levels are low in mitotic and early G1-phAse cells and are induced in late G1-/early S-phase, peaking in S-phase and decrease toward the end of the cell cycle. Abundant in spleen, ovary, prostate, testis, and colon mucosa.

Its subcellular location is the nucleus. It localises to the chromosome. Functionally, component of the origin recognition complex (ORC) that binds origins of replication. DNA-binding is ATP-dependent. The specific DNA sequences that define origins of replication have not been identified yet. ORC is required to assemble the pre-replication complex necessary to initiate DNA replication. This is Origin recognition complex subunit 5 (ORC5) from Homo sapiens (Human).